Here is a 35-residue protein sequence, read N- to C-terminus: Jingzhaotoxin F5-21.66 (35 aa).

3 disulfides stabilise this stretch: Cys-2–Cys-16, Cys-9–Cys-21, and Cys-15–Cys-29.

Belongs to the neurotoxin 10 (Hwtx-1) family. 48 (Jztx-F5) subfamily. In terms of tissue distribution, expressed by the venom gland.

The protein localises to the secreted. Functionally, probable ion channel inhibitor. This Chilobrachys guangxiensis (Chinese earth tiger tarantula) protein is Jingzhaotoxin F5-21.66.